A 551-amino-acid chain; its full sequence is Chaperonin GroEL (551 aa).

ATP-binding positions include 30–33 (TLGP), Lys-51, 87–91 (DGTTT), Gly-415, and Asp-496.

The protein belongs to the chaperonin (HSP60) family. In terms of assembly, forms a cylinder of 14 subunits composed of two heptameric rings stacked back-to-back. Interacts with the co-chaperonin GroES.

The protein resides in the cytoplasm. The catalysed reaction is ATP + H2O + a folded polypeptide = ADP + phosphate + an unfolded polypeptide.. Together with its co-chaperonin GroES, plays an essential role in assisting protein folding. The GroEL-GroES system forms a nano-cage that allows encapsulation of the non-native substrate proteins and provides a physical environment optimized to promote and accelerate protein folding. This Maricaulis maris (strain MCS10) (Caulobacter maris) protein is Chaperonin GroEL.